We begin with the raw amino-acid sequence, 477 residues long: Xylose isomerase (477 aa).

The active site involves histidine 142. Mn(2+)-binding residues include glutamate 273, glutamate 309, histidine 312, aspartate 337, aspartate 348, aspartate 350, and aspartate 380.

The protein belongs to the xylose isomerase family. Mn(2+) is required as a cofactor.

It catalyses the reaction alpha-D-xylose = alpha-D-xylulofuranose. The chain is Xylose isomerase (XYLA) from Arabidopsis thaliana (Mouse-ear cress).